The sequence spans 313 residues: Homoserine O-succinyltransferase (313 aa).

Catalysis depends on cysteine 142, which acts as the Acyl-thioester intermediate. Residues lysine 163 and serine 192 each contribute to the substrate site. The Proton acceptor role is filled by histidine 235. Glutamate 237 is a catalytic residue. Arginine 249 contacts substrate.

Belongs to the MetA family.

It localises to the cytoplasm. The catalysed reaction is L-homoserine + succinyl-CoA = O-succinyl-L-homoserine + CoA. Its pathway is amino-acid biosynthesis; L-methionine biosynthesis via de novo pathway; O-succinyl-L-homoserine from L-homoserine: step 1/1. In terms of biological role, transfers a succinyl group from succinyl-CoA to L-homoserine, forming succinyl-L-homoserine. This chain is Homoserine O-succinyltransferase, found in Shewanella baltica (strain OS195).